Consider the following 1416-residue polypeptide: DNA-directed RNA polymerase subunit beta (1416 aa).

It belongs to the RNA polymerase beta chain family. In terms of assembly, in plastids the minimal PEP RNA polymerase catalytic core is composed of four subunits: alpha, beta, beta', and beta''. When a (nuclear-encoded) sigma factor is associated with the core the holoenzyme is formed, which can initiate transcription.

The protein localises to the plastid. It localises to the chloroplast. The catalysed reaction is RNA(n) + a ribonucleoside 5'-triphosphate = RNA(n+1) + diphosphate. Functionally, DNA-dependent RNA polymerase catalyzes the transcription of DNA into RNA using the four ribonucleoside triphosphates as substrates. This chain is DNA-directed RNA polymerase subunit beta, found in Oltmannsiellopsis viridis (Marine flagellate).